Here is a 105-residue protein sequence, read N- to C-terminus: uncharacterized protein (105 aa).

The chain crosses the membrane as a helical span at residues 13-35 (LLFAFVVVIVVLTLSYVYAQNII).

The protein localises to the membrane. This is an uncharacterized protein from Archaeoglobus fulgidus (strain ATCC 49558 / DSM 4304 / JCM 9628 / NBRC 100126 / VC-16).